The following is a 293-amino-acid chain: Ribulose bisphosphate carboxylase/oxygenase activase, chloroplastic (293 aa).

75-82 is an ATP binding site; sequence PGTGKTTV.

The protein belongs to the CbxX/CfxQ family. As to quaternary structure, forms homooligomers. Forms heterohexameric rings with the nuclear-encoded Rca subunit consisting of 3 of each nuclear- and plastidial-encoded subunits that alternate in the ring.

The protein resides in the plastid. Its subcellular location is the chloroplast. In terms of biological role, required for the expression of ribulose 1,5-bisphosphate carboxylase/oxygenase (RuBisCo). ATPase involved in the activation of red-type RuBisCo, which tends to form inactive complexes with its substrate ribulose 1,5-bisphosphate (RuBP). Catalyzes the release of RuBP from inhibited RuBisCo in an ATP-dependent manner. Activation of RuBisCO involves the ATP-dependent carboxylation of the epsilon-amino group of lysine leading to a carbamate structure. The nuclear-encoded subunit plays a more critical role in activase function than the plastidial-encoded subunit. The protein is Ribulose bisphosphate carboxylase/oxygenase activase, chloroplastic of Cyanidioschyzon merolae (strain NIES-3377 / 10D) (Unicellular red alga).